The following is a 124-amino-acid chain: Large ribosomal subunit protein bL12 (124 aa).

The protein belongs to the bacterial ribosomal protein bL12 family. In terms of assembly, homodimer. Part of the ribosomal stalk of the 50S ribosomal subunit. Forms a multimeric L10(L12)X complex, where L10 forms an elongated spine to which 2 to 4 L12 dimers bind in a sequential fashion. Binds GTP-bound translation factors.

Forms part of the ribosomal stalk which helps the ribosome interact with GTP-bound translation factors. Is thus essential for accurate translation. The sequence is that of Large ribosomal subunit protein bL12 from Aromatoleum aromaticum (strain DSM 19018 / LMG 30748 / EbN1) (Azoarcus sp. (strain EbN1)).